The chain runs to 301 residues: Protein FdhE homolog (301 aa).

Belongs to the FdhE family.

Its subcellular location is the cytoplasm. Functionally, necessary for formate dehydrogenase activity. This Shewanella baltica (strain OS223) protein is Protein FdhE homolog.